The chain runs to 76 residues: Defensin-like protein 5 (76 aa).

Residues 1 to 29 form the signal peptide; that stretch reads MKVSPRLNSALLLLFMILATVMGLVTVEA. Cystine bridges form between C32–C76, C43–C63, C49–C70, and C53–C72.

Belongs to the DEFL family.

The protein localises to the secreted. In terms of biological role, confers broad-spectrum resistance to pathogens. In Arabidopsis thaliana (Mouse-ear cress), this protein is Defensin-like protein 5 (PDF2.4).